A 370-amino-acid polypeptide reads, in one-letter code: Glutamate 5-kinase (370 aa).

Lys11 is an ATP binding site. Substrate contacts are provided by Ser52, Asp139, and Asn151. Residues Thr171–Asp172 and Thr213–Lys219 each bind ATP. Residues Thr278–Glu356 form the PUA domain.

Belongs to the glutamate 5-kinase family.

It is found in the cytoplasm. The enzyme catalyses L-glutamate + ATP = L-glutamyl 5-phosphate + ADP. The protein operates within amino-acid biosynthesis; L-proline biosynthesis; L-glutamate 5-semialdehyde from L-glutamate: step 1/2. In terms of biological role, catalyzes the transfer of a phosphate group to glutamate to form L-glutamate 5-phosphate. The polypeptide is Glutamate 5-kinase (Synechococcus sp. (strain ATCC 27144 / PCC 6301 / SAUG 1402/1) (Anacystis nidulans)).